The chain runs to 220 residues: Probable transcriptional regulator NRG2 (220 aa).

2 C2H2-type zinc fingers span residues 153-175 (HFCK…NRIH) and 181-205 (HICP…YRTH).

The protein resides in the nucleus. In terms of biological role, transcriptional repressor. This chain is Probable transcriptional regulator NRG2 (NRG2), found in Saccharomyces cerevisiae (strain ATCC 204508 / S288c) (Baker's yeast).